Consider the following 131-residue polypeptide: D-ribose pyranase (131 aa).

Residue His-20 is the Proton donor of the active site. Substrate contacts are provided by residues Asp-28, His-98, and 120 to 122 (YAN).

Belongs to the RbsD / FucU family. RbsD subfamily. As to quaternary structure, homodecamer.

Its subcellular location is the cytoplasm. It carries out the reaction beta-D-ribopyranose = beta-D-ribofuranose. Its pathway is carbohydrate metabolism; D-ribose degradation; D-ribose 5-phosphate from beta-D-ribopyranose: step 1/2. Its function is as follows. Catalyzes the interconversion of beta-pyran and beta-furan forms of D-ribose. The protein is D-ribose pyranase of Bacillus cereus (strain ZK / E33L).